Consider the following 447-residue polypeptide: N-succinylarginine dihydrolase (447 aa).

Substrate is bound by residues 21–30 (AGLAHGNVAS), N112, and 139–140 (HR). E176 is a catalytic residue. R215 provides a ligand contact to substrate. Residue H251 is part of the active site. 2 residues coordinate substrate: D253 and N364. Catalysis depends on C370, which acts as the Nucleophile.

Belongs to the succinylarginine dihydrolase family. As to quaternary structure, homodimer.

It carries out the reaction N(2)-succinyl-L-arginine + 2 H2O + 2 H(+) = N(2)-succinyl-L-ornithine + 2 NH4(+) + CO2. It functions in the pathway amino-acid degradation; L-arginine degradation via AST pathway; L-glutamate and succinate from L-arginine: step 2/5. Functionally, catalyzes the hydrolysis of N(2)-succinylarginine into N(2)-succinylornithine, ammonia and CO(2). This is N-succinylarginine dihydrolase from Chromohalobacter salexigens (strain ATCC BAA-138 / DSM 3043 / CIP 106854 / NCIMB 13768 / 1H11).